The following is a 166-amino-acid chain: MNNYQLTINEVIDIINTNTEINKLVAKKENLFPTDLYDLDKQELIAIILNSDFALSSIKRVLLEVTVEELGTQDNDEDDELEDLDGEIDRVDYIDKDGIRFDVPRETSPHVDKSIVTFNDELLDEANKIAKSIQEHDFNDKAIEEAELKIFKNHLPSIYSMKKENK.

It belongs to the phi29likevirus protein p56 family. In terms of assembly, homodimer. Interacts with the histone-like protein p6; this interaction optimizes the binding of protein p6 at the viral DNA ends, thus favoring the initiation of replication.

Functionally, involved in the replication of viral DNA. It is required at the very beginning of the virus amplification, conditions in which a low number of viral DNA molecules enter the host cell, possibly to recruit the limiting amount of initiation factors at the replication origins. Once the infection process is established and the other replication proteins reach optimal concentration, it becomes dispensable. Optimizes the binding of protein p6 at the viral DNA ends, thus favoring the initiation of replication. This is DNA replication protein 17 (17) from Bacillus subtilis (Bacteriophage phi-29).